Here is a 231-residue protein sequence, read N- to C-terminus: GTP-binding protein RHO3 (231 aa).

23–30 contacts GTP; sequence GDGACGKT. Positions 45 to 53 match the Effector region motif; it reads YEPTVFENY. Residues 70–74 and 128–131 contribute to the GTP site; these read DTAGQ and LKCD. Residues 139-150 are compositionally biased toward polar residues; it reads SNAITPNNIQQD. A disordered region spans residues 139–165; sequence SNAITPNNIQQDNSVSNDNGNNINSTS. The segment covering 151–165 has biased composition (low complexity); sequence NSVSNDNGNNINSTS. A Cysteine methyl ester modification is found at cysteine 228. The S-farnesyl cysteine moiety is linked to residue cysteine 228. Positions 229–231 are cleaved as a propeptide — removed in mature form; it reads TIM.

The protein belongs to the small GTPase superfamily. Rho family. As to quaternary structure, interacts with TOS7.

It is found in the cell membrane. Activity is positively regulated by the GTPase activating protein (GAP) RGD1. Its function is as follows. Plays an important role in cell growth. Required to keep the uninucleated state. Modulates morphogenesis during bud growth via directing organization of the actin cytoskeleton and the position of the secretory machinery for exocytosis. This Saccharomyces cerevisiae (strain ATCC 204508 / S288c) (Baker's yeast) protein is GTP-binding protein RHO3.